Here is a 298-residue protein sequence, read N- to C-terminus: Putative insertion sequence ATP-binding protein y4iQ/y4nD/y4sD (298 aa).

Residue 114–121 (GPPGGGKS) coordinates ATP. Positions 276 to 298 (RQSEHDETLASDNQHDTFMPTAT) are disordered.

It belongs to the IS21/IS1162 putative ATP-binding protein family.

This Sinorhizobium fredii (strain NBRC 101917 / NGR234) protein is Putative insertion sequence ATP-binding protein y4iQ/y4nD/y4sD.